Here is a 100-residue protein sequence, read N- to C-terminus: Small ribosomal subunit protein uS14c (100 aa).

Positions 1–10 are enriched in basic and acidic residues; the sequence is MARKGLIERE. Residues 1-29 are disordered; sequence MARKGLIEREKKRKKLEQKYHSIRGSSKK.

The protein belongs to the universal ribosomal protein uS14 family. As to quaternary structure, part of the 30S ribosomal subunit.

The protein resides in the plastid. The protein localises to the chloroplast. Functionally, binds 16S rRNA, required for the assembly of 30S particles. This chain is Small ribosomal subunit protein uS14c, found in Acorus calamus (Sweet flag).